A 70-amino-acid polypeptide reads, in one-letter code: MLVLTRRVGETLMIGDDIKLTVVGIKSGQVRLGIDAPKDVQIQREELLLKNDKAENQAAESLEIEIVAAD.

Belongs to the CsrA/RsmA family. As to quaternary structure, homodimer; the beta-strands of each monomer intercalate to form a hydrophobic core, while the alpha-helices form wings that extend away from the core.

The protein localises to the cytoplasm. Functionally, a key translational regulator that binds mRNA to regulate translation initiation and/or mRNA stability. Mediates global changes in gene expression, shifting from rapid growth to stress survival by linking envelope stress, the stringent response and the catabolite repression systems. Usually binds in the 5'-UTR; binding at or near the Shine-Dalgarno sequence prevents ribosome-binding, repressing translation, binding elsewhere in the 5'-UTR can activate translation and/or stabilize the mRNA. Its function is antagonized by small RNA(s). The polypeptide is Translational regulator CsrA (Hydrogenovibrio crunogenus (strain DSM 25203 / XCL-2) (Thiomicrospira crunogena)).